A 66-amino-acid polypeptide reads, in one-letter code: MAFLKKSLFLVLFLGLVSLSICEEEKRETEEEEHDQEEDDKSEEKRFLSMIPHIVSGVAALAKHLG.

The first 22 residues, 1 to 22 (MAFLKKSLFLVLFLGLVSLSIC), serve as a signal peptide directing secretion. The propeptide occupies 23 to 46 (EEEKRETEEEEHDQEEDDKSEEKR). A disordered region spans residues 25–44 (EKRETEEEEHDQEEDDKSEE). Residues 30 to 41 (EEEEHDQEEDDK) show a composition bias toward acidic residues. L65 bears the Leucine amide mark.

Expressed by the skin glands.

The protein resides in the secreted. It localises to the target cell membrane. Functionally, antimicrobial peptide with high activity against Gram-positive bacteria, moderate activity against Gram-negative bacteria, and moderate activity against fungi. Acts by causing bacterial membrane disruption inducing leakage of the intracellular content followed by cell death. It adopts an alpha-helical amphipathic structure in membrane environments. Also shows highly potent antiparasitic activity against Leishmania species. Shows moderate hemolytic activity on human erythrocytes (LC(50)=33 uM). Is also active on human monocytes (IC(50)=23 uM). The polypeptide is Phylloseptin-S4 (Phyllomedusa sauvagei (Sauvage's leaf frog)).